The primary structure comprises 117 residues: Conotoxin vil14a (117 aa).

Residues methionine 1 to serine 22 form the signal peptide. Residues glutamate 23–arginine 90 constitute a propeptide that is removed on maturation. The disordered stretch occupies residues arginine 53–valine 86. The span at arginine 62–glutamate 80 shows a compositional bias: basic and acidic residues. 2 disulfide bridges follow: cysteine 96–cysteine 116 and cysteine 100–cysteine 112.

It belongs to the conotoxin R superfamily. As to expression, expressed by the venom duct.

The protein resides in the secreted. The protein is Conotoxin vil14a of Conus villepinii (Villepin's cone).